A 366-amino-acid polypeptide reads, in one-letter code: tRNA/tmRNA (uracil-C(5))-methyltransferase (366 aa).

Residues Gln190, Tyr218, Asn223, Glu239, and Asp299 each coordinate S-adenosyl-L-methionine. The Nucleophile role is filled by Cys324. Glu358 (proton acceptor) is an active-site residue.

Belongs to the class I-like SAM-binding methyltransferase superfamily. RNA M5U methyltransferase family. TrmA subfamily.

It catalyses the reaction uridine(54) in tRNA + S-adenosyl-L-methionine = 5-methyluridine(54) in tRNA + S-adenosyl-L-homocysteine + H(+). The enzyme catalyses uridine(341) in tmRNA + S-adenosyl-L-methionine = 5-methyluridine(341) in tmRNA + S-adenosyl-L-homocysteine + H(+). Dual-specificity methyltransferase that catalyzes the formation of 5-methyluridine at position 54 (m5U54) in all tRNAs, and that of position 341 (m5U341) in tmRNA (transfer-mRNA). The sequence is that of tRNA/tmRNA (uracil-C(5))-methyltransferase from Escherichia coli O17:K52:H18 (strain UMN026 / ExPEC).